A 64-amino-acid chain; its full sequence is Large ribosomal subunit protein bL32 (64 aa).

A disordered region spans residues Met-1 to Glu-35.

This sequence belongs to the bacterial ribosomal protein bL32 family.

The polypeptide is Large ribosomal subunit protein bL32 (Stenotrophomonas maltophilia (strain R551-3)).